A 164-amino-acid polypeptide reads, in one-letter code: 6,7-dimethyl-8-ribityllumazine synthase (164 aa).

5-amino-6-(D-ribitylamino)uracil contacts are provided by residues Phe-24, Ala-58–Glu-60, and Ala-82–Ile-84. Residue Glu-87–Thr-88 participates in (2S)-2-hydroxy-3-oxobutyl phosphate binding. The active-site Proton donor is His-90. Asn-115 lines the 5-amino-6-(D-ribitylamino)uracil pocket. (2S)-2-hydroxy-3-oxobutyl phosphate is bound at residue Arg-129.

It belongs to the DMRL synthase family.

It catalyses the reaction (2S)-2-hydroxy-3-oxobutyl phosphate + 5-amino-6-(D-ribitylamino)uracil = 6,7-dimethyl-8-(1-D-ribityl)lumazine + phosphate + 2 H2O + H(+). Its pathway is cofactor biosynthesis; riboflavin biosynthesis; riboflavin from 2-hydroxy-3-oxobutyl phosphate and 5-amino-6-(D-ribitylamino)uracil: step 1/2. In terms of biological role, catalyzes the formation of 6,7-dimethyl-8-ribityllumazine by condensation of 5-amino-6-(D-ribitylamino)uracil with 3,4-dihydroxy-2-butanone 4-phosphate. This is the penultimate step in the biosynthesis of riboflavin. In Ralstonia nicotianae (strain ATCC BAA-1114 / GMI1000) (Ralstonia solanacearum), this protein is 6,7-dimethyl-8-ribityllumazine synthase.